The primary structure comprises 476 residues: UDP-N-acetylmuramate--L-alanine ligase (476 aa).

G115 to T121 is an ATP binding site.

It belongs to the MurCDEF family.

The protein resides in the cytoplasm. The enzyme catalyses UDP-N-acetyl-alpha-D-muramate + L-alanine + ATP = UDP-N-acetyl-alpha-D-muramoyl-L-alanine + ADP + phosphate + H(+). The protein operates within cell wall biogenesis; peptidoglycan biosynthesis. Functionally, cell wall formation. This Paramagnetospirillum magneticum (strain ATCC 700264 / AMB-1) (Magnetospirillum magneticum) protein is UDP-N-acetylmuramate--L-alanine ligase.